The chain runs to 125 residues: RxLR effector protein Avh6 (125 aa).

The N-terminal stretch at 1 to 25 (MRLSSTTFVVLAAVLLASGTAVSKA) is a signal peptide. The short motif at 48–70 (RFLRSHHTEDGKAKLSNYDNEER) is the RxLR-dEER element.

It belongs to the RxLR effector family.

The protein localises to the secreted. Its subcellular location is the host cell. Effector that suppresses plant defense responses during the early stages of pathogen infection. Suppresses cell death induced by effectors and PAMPs in plant hosts. Triggers a hypersensitive response (HR) in the presence of Rps1d. Suppresses BAX-induced cell death and enhanced P.capsici infection in Nicotiana benthamiana. Also suppresses effector-triggered immunity induction by associating with Avr1b and Rps1b, suggesting a role in suppressing plant immunity. The protein is RxLR effector protein Avh6 of Phytophthora sojae (Soybean stem and root rot agent).